A 291-amino-acid chain; its full sequence is NADH-cytochrome b5 reductase 2 (291 aa).

Residues 7–23 traverse the membrane as a helical segment; that stretch reads PIAATSVVAAAASSYYF. The 105-residue stretch at 41 to 145 folds into the FAD-binding FR-type domain; the sequence is DQWVDLKLKS…KGPIIKYQWQ (105 aa). Residue 148 to 183 participates in FAD binding; it reads LHKEITLIGAGTGITPLYQLISAINKNPEDKTKVNL.

Belongs to the flavoprotein pyridine nucleotide cytochrome reductase family. The cofactor is FAD.

Its subcellular location is the mitochondrion outer membrane. The catalysed reaction is 2 Fe(III)-[cytochrome b5] + NADH = 2 Fe(II)-[cytochrome b5] + NAD(+) + H(+). Functionally, may mediate the reduction of outer membrane cytochrome b5. The sequence is that of NADH-cytochrome b5 reductase 2 (MCR1) from Yarrowia lipolytica (strain CLIB 122 / E 150) (Yeast).